A 490-amino-acid chain; its full sequence is Glutamate--tRNA ligase (490 aa).

Residues 15–25 (PSPTGYLHVGG) carry the 'HIGH' region motif. Positions 259-263 (KLSKR) match the 'KMSKS' region motif. Residue Lys262 coordinates ATP.

Belongs to the class-I aminoacyl-tRNA synthetase family. Glutamate--tRNA ligase type 1 subfamily. Monomer.

It localises to the cytoplasm. The catalysed reaction is tRNA(Glu) + L-glutamate + ATP = L-glutamyl-tRNA(Glu) + AMP + diphosphate. Its function is as follows. Catalyzes the attachment of glutamate to tRNA(Glu) in a two-step reaction: glutamate is first activated by ATP to form Glu-AMP and then transferred to the acceptor end of tRNA(Glu). The sequence is that of Glutamate--tRNA ligase from Bdellovibrio bacteriovorus (strain ATCC 15356 / DSM 50701 / NCIMB 9529 / HD100).